A 145-amino-acid polypeptide reads, in one-letter code: Transcriptional regulator SlyA (145 aa).

Residues 2–135 (ELPLGSDLAR…LALLVARLEK (134 aa)) enclose the HTH marR-type domain. The segment at residues 49-72 (QIQLAKAIGIEQPSLVRTLDQLEE) is a DNA-binding region (H-T-H motif).

Belongs to the SlyA family. Homodimer.

Transcription regulator that can specifically activate or repress expression of target genes. The sequence is that of Transcriptional regulator SlyA from Pectobacterium atrosepticum (strain SCRI 1043 / ATCC BAA-672) (Erwinia carotovora subsp. atroseptica).